A 113-amino-acid polypeptide reads, in one-letter code: P antigen family member 3 (113 aa).

The span at 1 to 12 (MSGHQRTRSRSR) shows a compositional bias: basic residues. 2 disordered regions span residues 1–61 (MSGH…EGAL) and 78–113 (SKTG…QPSV).

It belongs to the GAGE family.

The polypeptide is P antigen family member 3 (PAGE3) (Homo sapiens (Human)).